The following is a 363-amino-acid chain: Phosphate acyltransferase (363 aa).

The disordered stretch occupies residues 326 to 363 (ADSHPSKVNAGENAPPLASASNPSPEALPVGSLDRVEG). A compositionally biased stretch (low complexity) spans 337–354 (ENAPPLASASNPSPEALP).

This sequence belongs to the PlsX family. In terms of assembly, homodimer. Probably interacts with PlsY.

Its subcellular location is the cytoplasm. It catalyses the reaction a fatty acyl-[ACP] + phosphate = an acyl phosphate + holo-[ACP]. It participates in lipid metabolism; phospholipid metabolism. Functionally, catalyzes the reversible formation of acyl-phosphate (acyl-PO(4)) from acyl-[acyl-carrier-protein] (acyl-ACP). This enzyme utilizes acyl-ACP as fatty acyl donor, but not acyl-CoA. This chain is Phosphate acyltransferase, found in Synechococcus sp. (strain JA-3-3Ab) (Cyanobacteria bacterium Yellowstone A-Prime).